Consider the following 120-residue polypeptide: Flagellar protein FliT (120 aa).

The interval 1–50 (MENLSPLLIEYQGLLKLIRNIKAMALNGLWDDVVEQEIVYIQSIERISQI) is required for homodimerization. The segment at 60–98 (VQLQFRQLLQDILDTESQVKELLQNRMQELAVLIQQSQN) is fliD binding.

It belongs to the FliT family. In terms of assembly, homodimer. Interacts with FliD and FlhC.

The protein localises to the cytoplasm. It localises to the cytosol. Its function is as follows. Dual-function protein that regulates the transcription of class 2 flagellar operons and that also acts as an export chaperone for the filament-capping protein FliD. As a transcriptional regulator, acts as an anti-FlhDC factor; it directly binds FlhC, thus inhibiting the binding of the FlhC/FlhD complex to class 2 promoters, resulting in decreased expression of class 2 flagellar operons. As a chaperone, effects FliD transition to the membrane by preventing its premature polymerization, and by directing it to the export apparatus. This is Flagellar protein FliT from Dickeya chrysanthemi (Pectobacterium chrysanthemi).